The primary structure comprises 69 residues: Putative membrane protein insertion efficiency factor (69 aa).

This sequence belongs to the UPF0161 family.

Its subcellular location is the cell inner membrane. Functionally, could be involved in insertion of integral membrane proteins into the membrane. The sequence is that of Putative membrane protein insertion efficiency factor from Laribacter hongkongensis (strain HLHK9).